A 268-amino-acid polypeptide reads, in one-letter code: 4-diphosphocytidyl-2-C-methyl-D-erythritol kinase (268 aa).

Lysine 10 is an active-site residue. 101-111 provides a ligand contact to ATP; sequence PTQAGLGGGST. The active site involves aspartate 143.

This sequence belongs to the GHMP kinase family. IspE subfamily.

The catalysed reaction is 4-CDP-2-C-methyl-D-erythritol + ATP = 4-CDP-2-C-methyl-D-erythritol 2-phosphate + ADP + H(+). It participates in isoprenoid biosynthesis; isopentenyl diphosphate biosynthesis via DXP pathway; isopentenyl diphosphate from 1-deoxy-D-xylulose 5-phosphate: step 3/6. Functionally, catalyzes the phosphorylation of the position 2 hydroxy group of 4-diphosphocytidyl-2C-methyl-D-erythritol. This is 4-diphosphocytidyl-2-C-methyl-D-erythritol kinase from Helicobacter pylori (strain ATCC 700392 / 26695) (Campylobacter pylori).